Consider the following 194-residue polypeptide: Thymidine kinase (194 aa).

ATP contacts are provided by residues 15–22 and 89–92; these read GPMFSGKS and DEAH. The Proton acceptor role is filled by Glu-90. Cys-146, Cys-149, Cys-178, and Cys-181 together coordinate Zn(2+).

It belongs to the thymidine kinase family. Homotetramer.

It is found in the cytoplasm. It catalyses the reaction thymidine + ATP = dTMP + ADP + H(+). In Metamycoplasma arthritidis (strain 158L3-1) (Mycoplasma arthritidis), this protein is Thymidine kinase.